The chain runs to 380 residues: Flap endonuclease 1 (380 aa).

An N-domain region spans residues 1 to 104 (MGIQGLAKLI…GELAKRSERR (104 aa)). A Symmetric dimethylarginine; by PRMT5 modification is found at R19. Position 34 (D34) interacts with Mg(2+). Positions 47 and 70 each coordinate DNA. At K80 the chain carries N6-acetyllysine. D86 contributes to the Mg(2+) binding site. A symmetric dimethylarginine; by PRMT5 mark is found at R100 and R104. The interval 122 to 253 (EVEKFTKRLV…KRAVDLIQKH (132 aa)) is I-domain. Mg(2+) is bound by residues E158, E160, D179, and D181. DNA is bound at residue E158. S187 carries the post-translational modification Phosphoserine; by CDK2. R192 bears the Symmetric dimethylarginine; by PRMT5 mark. S197 carries the phosphoserine modification. DNA is bound by residues G231 and D233. D233 is a binding site for Mg(2+). Phosphoserine occurs at positions 255, 293, and 335. The disordered stretch occupies residues 327–380 (RLSKSRQGSTQGRLDDFFKVTGSLSSAKRKEPEPKGSTKKKAKTGAAGKFKRGK). Phosphothreonine is present on T336. Residues 336–344 (TQGRLDDFF) form an interaction with PCNA region. K354 is subject to N6-acetyllysine. The segment covering 363–380 (STKKKAKTGAAGKFKRGK) has biased composition (basic residues). Residue T364 is modified to Phosphothreonine. N6-acetyllysine is present on residues K375, K377, and K380.

It belongs to the XPG/RAD2 endonuclease family. FEN1 subfamily. As to quaternary structure, interacts with PCNA. Three molecules of FEN1 bind to one PCNA trimer with each molecule binding to one PCNA monomer. PCNA stimulates the nuclease activity without altering cleavage specificity. The C-terminal domain binds EP300; can bind simultaneously to both PCNA and EP300. Interacts with DDX11; this interaction is direct and increases flap endonuclease activity of FEN1. Interacts with WDR4; regulating its endonuclease activity. Interacts with POLB. Requires Mg(2+) as cofactor. In terms of processing, acetylated by EP300. Acetylation inhibits both endonuclease and exonuclease activity. Acetylation also reduces DNA-binding activity but does not affect interaction with PCNA or EP300. Post-translationally, phosphorylation upon DNA damage induces relocalization to the nuclear plasma. Phosphorylation at Ser-187 by CDK2 occurs during late S-phase and results in dissociation from PCNA. Methylation at Arg-192 by PRMT5 impedes Ser-187 phosphorylation and increases interaction with PCNA.

The protein localises to the nucleus. It localises to the nucleolus. The protein resides in the nucleoplasm. It is found in the mitochondrion. Its function is as follows. Structure-specific nuclease with 5'-flap endonuclease and 5'-3' exonuclease activities involved in DNA replication and repair. During DNA replication, cleaves the 5'-overhanging flap structure that is generated by displacement synthesis when DNA polymerase encounters the 5'-end of a downstream Okazaki fragment. It enters the flap from the 5'-end and then tracks to cleave the flap base, leaving a nick for ligation. Also involved in the long patch base excision repair (LP-BER) pathway, by cleaving within the apurinic/apyrimidinic (AP) site-terminated flap. Acts as a genome stabilization factor that prevents flaps from equilibrating into structures that lead to duplications and deletions. Also possesses 5'-3' exonuclease activity on nicked or gapped double-stranded DNA, and exhibits RNase H activity. Also involved in replication and repair of rDNA and in repairing mitochondrial DNA. The sequence is that of Flap endonuclease 1 from Homo sapiens (Human).